Here is a 36-residue protein sequence, read N- to C-terminus: Photosystem I reaction center subunit VIII (36 aa).

Residues 7 to 29 traverse the membrane as a helical segment; that stretch reads PSILVPLVGILLPAVTMASLFLY.

Belongs to the PsaI family.

The protein localises to the plastid. The protein resides in the chloroplast thylakoid membrane. May help in the organization of the PsaL subunit. The polypeptide is Photosystem I reaction center subunit VIII (Adiantum capillus-veneris (Maidenhair fern)).